The sequence spans 179 residues: Transcription factor 21 (179 aa).

Residues 20–87 (CDGLKMDSNK…QVQRNAANAR (68 aa)) form a disordered region. Low complexity predominate over residues 33 to 46 (TSNESTEESSNCEN). Positions 70–80 (SGVSQEGKQVQ) are enriched in polar residues. The region spanning 79–131 (VQRNAANARERARMRVLSKAFSRLKTTLPWVPPDTKLSKLDTLRLASSYIAHL) is the bHLH domain.

As to quaternary structure, efficient DNA binding requires dimerization with another bHLH protein. Forms a heterodimer with TCF3 and binds the E box (5'-CANNTG-3').

It is found in the nucleus. In terms of biological role, involved in epithelial-mesenchymal interactions in kidney and lung morphogenesis that include epithelial differentiation and branching morphogenesis. May play a role in the specification or differentiation of one or more subsets of epicardial cell types. The polypeptide is Transcription factor 21 (TCF21) (Homo sapiens (Human)).